A 147-amino-acid polypeptide reads, in one-letter code: Protegrin-2 (147 aa).

The N-terminal stretch at 1–29 (METQRASLCLGRWSLWLLLLALVVPSASA) is a signal peptide. Residues 30–130 (QALSYREAVL…DITCNEVQGV (101 aa)) constitute a propeptide that is removed on maturation. The tract at residues 61-80 (DQPPKADEDPGTPKPVSFTV) is disordered. 4 disulfides stabilise this stretch: C85/C96, C107/C124, C136/C145, and C138/C143. Position 146 is a valine amide (V146).

It belongs to the cathelicidin family.

The protein localises to the secreted. In terms of biological role, microbicidal activity. Active against E.coli, Listeria monocytogenes and C.albicans, in vitro. The polypeptide is Protegrin-2 (NPG2) (Sus scrofa (Pig)).